The sequence spans 58 residues: Ribosome biogenesis protein Nop10 (58 aa).

It belongs to the NOP10 family.

In terms of biological role, involved in ribosome biogenesis; more specifically in 18S rRNA pseudouridylation and in cleavage of pre-rRNA. The chain is Ribosome biogenesis protein Nop10 from Thermococcus onnurineus (strain NA1).